The chain runs to 96 residues: UPF0235 protein VV1_1522 (96 aa).

It belongs to the UPF0235 family.

The polypeptide is UPF0235 protein VV1_1522 (Vibrio vulnificus (strain CMCP6)).